We begin with the raw amino-acid sequence, 187 residues long: Transcriptional repressor NrdR (187 aa).

A zinc finger lies at 3–34 (CPFCRHPDSRVVDSRTTDDGTSIRRRRQCPDC). Positions 46–136 (LMVVKRSGVT…VYRAFDSLED (91 aa)) constitute an ATP-cone domain. The tract at residues 146 to 187 (EEQRERPAVDDEDHEDAGAERQGTDRGSGGTVEVPVPATVAD) is disordered.

The protein belongs to the NrdR family. The cofactor is Zn(2+).

Functionally, negatively regulates transcription of bacterial ribonucleotide reductase nrd genes and operons by binding to NrdR-boxes. This chain is Transcriptional repressor NrdR, found in Streptomyces avermitilis (strain ATCC 31267 / DSM 46492 / JCM 5070 / NBRC 14893 / NCIMB 12804 / NRRL 8165 / MA-4680).